Reading from the N-terminus, the 348-residue chain is Histidinol-phosphate aminotransferase (348 aa).

Lys211 is subject to N6-(pyridoxal phosphate)lysine.

The protein belongs to the class-II pyridoxal-phosphate-dependent aminotransferase family. Histidinol-phosphate aminotransferase subfamily. As to quaternary structure, homodimer. It depends on pyridoxal 5'-phosphate as a cofactor.

The enzyme catalyses L-histidinol phosphate + 2-oxoglutarate = 3-(imidazol-4-yl)-2-oxopropyl phosphate + L-glutamate. It participates in amino-acid biosynthesis; L-histidine biosynthesis; L-histidine from 5-phospho-alpha-D-ribose 1-diphosphate: step 7/9. The protein is Histidinol-phosphate aminotransferase of Pseudomonas entomophila (strain L48).